The chain runs to 352 residues: Cyclin-dependent kinase-like 1 (352 aa).

In terms of domain architecture, Protein kinase spans 4 to 287 (YEKIGKIGEG…CEQLLQHPYF (284 aa)). ATP-binding positions include 10-18 (IGEGSYGVV) and K33. A [NKR]KIAxRE motif is present at residues 45–51 (KKIALRE). Residue D126 is the Proton acceptor of the active site.

The protein belongs to the protein kinase superfamily. CMGC Ser/Thr protein kinase family. CDC2/CDKX subfamily.

It is found in the cytoplasm. The protein localises to the nucleus. The enzyme catalyses L-seryl-[protein] + ATP = O-phospho-L-seryl-[protein] + ADP + H(+). It catalyses the reaction L-threonyl-[protein] + ATP = O-phospho-L-threonyl-[protein] + ADP + H(+). This is Cyclin-dependent kinase-like 1 from Mus musculus (Mouse).